The sequence spans 485 residues: Protein nucleotidyltransferase YdiU (485 aa).

ATP is bound by residues G100, G102, R103, K123, D135, G136, R189, and R196. The active-site Proton acceptor is the D265. Residues N266 and D275 each contribute to the Mg(2+) site. Residue D275 participates in ATP binding.

It belongs to the SELO family. Mg(2+) is required as a cofactor. The cofactor is Mn(2+).

It catalyses the reaction L-seryl-[protein] + ATP = 3-O-(5'-adenylyl)-L-seryl-[protein] + diphosphate. The enzyme catalyses L-threonyl-[protein] + ATP = 3-O-(5'-adenylyl)-L-threonyl-[protein] + diphosphate. The catalysed reaction is L-tyrosyl-[protein] + ATP = O-(5'-adenylyl)-L-tyrosyl-[protein] + diphosphate. It carries out the reaction L-histidyl-[protein] + UTP = N(tele)-(5'-uridylyl)-L-histidyl-[protein] + diphosphate. It catalyses the reaction L-seryl-[protein] + UTP = O-(5'-uridylyl)-L-seryl-[protein] + diphosphate. The enzyme catalyses L-tyrosyl-[protein] + UTP = O-(5'-uridylyl)-L-tyrosyl-[protein] + diphosphate. Functionally, nucleotidyltransferase involved in the post-translational modification of proteins. It can catalyze the addition of adenosine monophosphate (AMP) or uridine monophosphate (UMP) to a protein, resulting in modifications known as AMPylation and UMPylation. This Trichormus variabilis (strain ATCC 29413 / PCC 7937) (Anabaena variabilis) protein is Protein nucleotidyltransferase YdiU.